We begin with the raw amino-acid sequence, 159 residues long: Small ribosomal subunit protein uS4 (159 aa).

The region spanning 106-158 is the S4 RNA-binding domain; the sequence is RRLQTLVFRMGLAKSIHHARQLVVHGHVLVAGRRVTSPGFLVPRELEDKITIE.

It belongs to the universal ribosomal protein uS4 family. As to quaternary structure, part of the 30S ribosomal subunit. Contacts protein S5. The interaction surface between S4 and S5 is involved in control of translational fidelity.

In terms of biological role, one of the primary rRNA binding proteins, it binds directly to 16S rRNA where it nucleates assembly of the body of the 30S subunit. With S5 and S12 plays an important role in translational accuracy. This is Small ribosomal subunit protein uS4 from Pyrobaculum calidifontis (strain DSM 21063 / JCM 11548 / VA1).